The sequence spans 363 residues: MKLKLFLLSVLLLVSGSSQAQRIKDIANVQGVRSNQLIGYGLVVGLPGTGEKTTYTEQTFKTMLKNFGINLPDNLRPKIKNVAVVAVHAEMPAFIKPGQTLDVTVSSLGEAKSLRGGTLLQTFLKGVDGNVYAIAQGSMVVSGFSAEGLDGSKVIQNTPTVGRIPNGGIVERTVTTPFSTGDHLTFNLRRADFSTAKRLADAINELLGPGMARPLDAASVQVSAPRDVSQRVSFLATLENIQVEPASESAKVIVNSRTGTIVVGREVRLLPAAVTHGGLTVTIAEATQVSQPNPLAGGQTVVTADTTIDVAEEDSRMFLFNPGTTLDELVRAVNLVGAAPSDVLAILEALKMAGALHGELIII.

A signal peptide spans 1–20 (MKLKLFLLSVLLLVSGSSQA).

The protein belongs to the FlgI family. The basal body constitutes a major portion of the flagellar organelle and consists of four rings (L,P,S, and M) mounted on a central rod.

Its subcellular location is the periplasm. It localises to the bacterial flagellum basal body. Its function is as follows. Assembles around the rod to form the L-ring and probably protects the motor/basal body from shearing forces during rotation. The protein is Flagellar P-ring protein of Shewanella woodyi (strain ATCC 51908 / MS32).